A 73-amino-acid polypeptide reads, in one-letter code: Translation initiation factor IF-1 (73 aa).

The S1-like domain occupies 1 to 72 (MAKQDVIEME…TKGRITYRLR (72 aa)).

This sequence belongs to the IF-1 family. Component of the 30S ribosomal translation pre-initiation complex which assembles on the 30S ribosome in the order IF-2 and IF-3, IF-1 and N-formylmethionyl-tRNA(fMet); mRNA recruitment can occur at any time during PIC assembly.

The protein resides in the cytoplasm. One of the essential components for the initiation of protein synthesis. Stabilizes the binding of IF-2 and IF-3 on the 30S subunit to which N-formylmethionyl-tRNA(fMet) subsequently binds. Helps modulate mRNA selection, yielding the 30S pre-initiation complex (PIC). Upon addition of the 50S ribosomal subunit IF-1, IF-2 and IF-3 are released leaving the mature 70S translation initiation complex. In Gloeobacter violaceus (strain ATCC 29082 / PCC 7421), this protein is Translation initiation factor IF-1.